Reading from the N-terminus, the 428-residue chain is Adenylosuccinate synthetase (428 aa).

GTP is bound by residues 12-18 (GDEGKGK) and 40-42 (GHT). The Proton acceptor role is filled by D13. Residues D13 and G40 each coordinate Mg(2+). Residues 13 to 16 (DEGK), 38 to 41 (NAGH), T130, R144, Q225, T240, and R304 contribute to the IMP site. Catalysis depends on H41, which acts as the Proton donor. Position 300 to 306 (300 to 306 (VTTGRAR)) interacts with substrate. Residues R306, 332–334 (KID), and 414–416 (SVG) each bind GTP.

This sequence belongs to the adenylosuccinate synthetase family. Homodimer. Requires Mg(2+) as cofactor.

Its subcellular location is the cytoplasm. It carries out the reaction IMP + L-aspartate + GTP = N(6)-(1,2-dicarboxyethyl)-AMP + GDP + phosphate + 2 H(+). It participates in purine metabolism; AMP biosynthesis via de novo pathway; AMP from IMP: step 1/2. Functionally, plays an important role in the de novo pathway of purine nucleotide biosynthesis. Catalyzes the first committed step in the biosynthesis of AMP from IMP. This chain is Adenylosuccinate synthetase, found in Clostridium botulinum (strain 657 / Type Ba4).